Reading from the N-terminus, the 603-residue chain is Aspartate--tRNA(Asp/Asn) ligase (603 aa).

Glu187 serves as a coordination point for L-aspartate. Positions 211 to 214 (QQFK) are aspartate. Arg233 and His461 together coordinate L-aspartate. 233-235 (RDE) provides a ligand contact to ATP. ATP is bound at residue Glu495. Arg502 provides a ligand contact to L-aspartate. An ATP-binding site is contributed by 547 to 550 (GLDR).

This sequence belongs to the class-II aminoacyl-tRNA synthetase family. Type 1 subfamily. In terms of assembly, homodimer.

It localises to the cytoplasm. It carries out the reaction tRNA(Asx) + L-aspartate + ATP = L-aspartyl-tRNA(Asx) + AMP + diphosphate. Functionally, aspartyl-tRNA synthetase with relaxed tRNA specificity since it is able to aspartylate not only its cognate tRNA(Asp) but also tRNA(Asn). Reaction proceeds in two steps: L-aspartate is first activated by ATP to form Asp-AMP and then transferred to the acceptor end of tRNA(Asp/Asn). This chain is Aspartate--tRNA(Asp/Asn) ligase, found in Chlorobaculum parvum (strain DSM 263 / NCIMB 8327) (Chlorobium vibrioforme subsp. thiosulfatophilum).